The primary structure comprises 345 residues: L-threonine 3-dehydrogenase (345 aa).

C39 contributes to the Zn(2+) binding site. Active-site charge relay system residues include T41 and H44. Zn(2+)-binding residues include H64, E65, C94, C97, C100, and C108. NAD(+)-binding positions include I176, D196, R201, 263 to 265 (LGI), and 287 to 288 (VY).

It belongs to the zinc-containing alcohol dehydrogenase family. As to quaternary structure, homotetramer. Requires Zn(2+) as cofactor.

Its subcellular location is the cytoplasm. The catalysed reaction is L-threonine + NAD(+) = (2S)-2-amino-3-oxobutanoate + NADH + H(+). Its pathway is amino-acid degradation; L-threonine degradation via oxydo-reductase pathway; glycine from L-threonine: step 1/2. In terms of biological role, catalyzes the NAD(+)-dependent oxidation of L-threonine to 2-amino-3-ketobutyrate. The polypeptide is L-threonine 3-dehydrogenase (Anaeromyxobacter dehalogenans (strain 2CP-1 / ATCC BAA-258)).